We begin with the raw amino-acid sequence, 131 residues long: Global transcriptional regulator Spx 1 (131 aa).

A disulfide bridge connects residues C10 and C13.

Belongs to the ArsC family. Spx subfamily. In terms of assembly, interacts with the C-terminal domain of the alpha subunit of the RNAP.

The protein localises to the cytoplasm. Its function is as follows. Global transcriptional regulator that plays a key role in stress response and exerts either positive or negative regulation of genes. Acts by interacting with the C-terminal domain of the alpha subunit of the RNA polymerase (RNAP). This interaction can enhance binding of RNAP to the promoter region of target genes and stimulate their transcription, or block interaction of RNAP with activator. This chain is Global transcriptional regulator Spx 1, found in Bacillus anthracis.